The chain runs to 314 residues: MDVQPTTMRGAVKTAHLGTDVSLATKPLPKPEWLRGKSASTPDVERLVRILRDNRLHTVCEEASCPNLGECFRKGTATFMIMGDVCTRHCPFCNVAHGSPHELAADEPVNLARAVELLKLSYVVITSVTRDDLPDGGAGHYGACVRALRDLKRSLKVEILTPDFRGAVAVAFEELRMNLPDVFNHNLETVPRLYPRVRPQADYHGSLDLLLRFREQFDHVPTKSGLMLGLGETEQEVRDVMEELRRHRCDMLTLGQYMRPSPHHLPVERYVTPDEFERYRQFGLSIGFSHVESGPMVRSSYHADMQARELMLVN.

C60, C65, C71, C86, C90, C93, and S300 together coordinate [4Fe-4S] cluster. One can recognise a Radical SAM core domain in the interval 72–289; the sequence is FRKGTATFMI…RQFGLSIGFS (218 aa).

The protein belongs to the radical SAM superfamily. Lipoyl synthase family. [4Fe-4S] cluster is required as a cofactor.

The protein resides in the cytoplasm. The catalysed reaction is [[Fe-S] cluster scaffold protein carrying a second [4Fe-4S](2+) cluster] + N(6)-octanoyl-L-lysyl-[protein] + 2 oxidized [2Fe-2S]-[ferredoxin] + 2 S-adenosyl-L-methionine + 4 H(+) = [[Fe-S] cluster scaffold protein] + N(6)-[(R)-dihydrolipoyl]-L-lysyl-[protein] + 4 Fe(3+) + 2 hydrogen sulfide + 2 5'-deoxyadenosine + 2 L-methionine + 2 reduced [2Fe-2S]-[ferredoxin]. The protein operates within protein modification; protein lipoylation via endogenous pathway; protein N(6)-(lipoyl)lysine from octanoyl-[acyl-carrier-protein]: step 2/2. Catalyzes the radical-mediated insertion of two sulfur atoms into the C-6 and C-8 positions of the octanoyl moiety bound to the lipoyl domains of lipoate-dependent enzymes, thereby converting the octanoylated domains into lipoylated derivatives. The polypeptide is Lipoyl synthase (Pelobacter propionicus (strain DSM 2379 / NBRC 103807 / OttBd1)).